We begin with the raw amino-acid sequence, 172 residues long: Cytidylate kinase (172 aa).

7–15 (GPPGSGTST) lines the ATP pocket.

The protein belongs to the cytidylate kinase family. Type 2 subfamily.

Its subcellular location is the cytoplasm. It carries out the reaction CMP + ATP = CDP + ADP. The enzyme catalyses dCMP + ATP = dCDP + ADP. This Methanothrix thermoacetophila (strain DSM 6194 / JCM 14653 / NBRC 101360 / PT) (Methanosaeta thermophila) protein is Cytidylate kinase.